The chain runs to 117 residues: Large ribosomal subunit protein bL19 (117 aa).

Belongs to the bacterial ribosomal protein bL19 family.

Functionally, this protein is located at the 30S-50S ribosomal subunit interface and may play a role in the structure and function of the aminoacyl-tRNA binding site. In Paenarthrobacter aurescens (strain TC1), this protein is Large ribosomal subunit protein bL19.